Consider the following 327-residue polypeptide: Probable cell division protein WhiA (327 aa).

Residues 275-308 constitute a DNA-binding region (H-T-H motif); it reads SLEELGRLADPPMTKDAVAGRIRRLLSMADRKAK.

It belongs to the WhiA family.

Involved in cell division and chromosome segregation. The polypeptide is Probable cell division protein WhiA (Mycobacterium bovis (strain ATCC BAA-935 / AF2122/97)).